The chain runs to 200 residues: NAD(P)H dehydrogenase (quinone) (200 aa).

A Flavodoxin-like domain is found at 4–191 (VLVLYYSSYG…DIARYQGKRV (188 aa)). Residues 10–15 (SSYGHV) and 79–81 (TRF) each bind FMN. Tyr12 lines the NAD(+) pocket. Trp99 lines the substrate pocket. FMN contacts are provided by residues 114–120 (STGTQHG) and His135.

This sequence belongs to the WrbA family. Requires FMN as cofactor.

It catalyses the reaction a quinone + NADH + H(+) = a quinol + NAD(+). It carries out the reaction a quinone + NADPH + H(+) = a quinol + NADP(+). The protein is NAD(P)H dehydrogenase (quinone) of Burkholderia lata (strain ATCC 17760 / DSM 23089 / LMG 22485 / NCIMB 9086 / R18194 / 383).